Here is a 420-residue protein sequence, read N- to C-terminus: Tyrosine--tRNA ligase 1 (420 aa).

Tyr-35 serves as a coordination point for L-tyrosine. The 'HIGH' region motif lies at 40–49; that stretch reads PTAGSLHIGH. L-tyrosine is bound by residues Tyr-172 and Gln-176. Residues 232 to 236 carry the 'KMSKS' region motif; the sequence is KFGKT. ATP is bound at residue Lys-235. The 65-residue stretch at 355–419 folds into the S4 RNA-binding domain; sequence INIAELLVKS…GKKQFRLIKL (65 aa).

This sequence belongs to the class-I aminoacyl-tRNA synthetase family. TyrS type 1 subfamily. In terms of assembly, homodimer.

It localises to the cytoplasm. The enzyme catalyses tRNA(Tyr) + L-tyrosine + ATP = L-tyrosyl-tRNA(Tyr) + AMP + diphosphate + H(+). Catalyzes the attachment of tyrosine to tRNA(Tyr) in a two-step reaction: tyrosine is first activated by ATP to form Tyr-AMP and then transferred to the acceptor end of tRNA(Tyr). The polypeptide is Tyrosine--tRNA ligase 1 (Pseudoalteromonas translucida (strain TAC 125)).